A 473-amino-acid chain; its full sequence is Ribulose bisphosphate carboxylase large chain (473 aa).

Substrate is bound by residues N116 and T166. The active-site Proton acceptor is K168. K170 contacts substrate. Mg(2+) contacts are provided by K194, D196, and E197. K194 carries the N6-carboxylysine modification. The active-site Proton acceptor is H287. 3 residues coordinate substrate: R288, H320, and S372.

The protein belongs to the RuBisCO large chain family. Type I subfamily. In terms of assembly, heterohexadecamer of 8 large chains and 8 small chains. It depends on Mg(2+) as a cofactor.

It carries out the reaction 2 (2R)-3-phosphoglycerate + 2 H(+) = D-ribulose 1,5-bisphosphate + CO2 + H2O. It catalyses the reaction D-ribulose 1,5-bisphosphate + O2 = 2-phosphoglycolate + (2R)-3-phosphoglycerate + 2 H(+). Its function is as follows. RuBisCO catalyzes two reactions: the carboxylation of D-ribulose 1,5-bisphosphate, the primary event in carbon dioxide fixation, as well as the oxidative fragmentation of the pentose substrate. Both reactions occur simultaneously and in competition at the same active site. This is Ribulose bisphosphate carboxylase large chain from Nitrosomonas eutropha (strain DSM 101675 / C91 / Nm57).